We begin with the raw amino-acid sequence, 141 residues long: Hydroperoxide reductase (141 aa).

This sequence belongs to the OsmC/Ohr family. As to quaternary structure, homodimer.

It localises to the cytoplasm. Its function is as follows. Reduces organic and inorganic peroxide substrates. Protects the cell against oxidative stress. This is Hydroperoxide reductase from Mycoplasma pneumoniae (strain ATCC 29342 / M129 / Subtype 1) (Mycoplasmoides pneumoniae).